A 310-amino-acid polypeptide reads, in one-letter code: L-lactate dehydrogenase (310 aa).

NAD(+)-binding residues include Val11, Asp32, and Arg37. Substrate contacts are provided by residues Gln79, Arg85, and 117-120 (NPVD). NAD(+) is bound by residues 115–117 (VTN) and Thr140. Residue 145–148 (DTAR) participates in substrate binding. Residues Arg150 and His165 each coordinate beta-D-fructose 1,6-bisphosphate. His172 acts as the Proton acceptor in catalysis. Tyr221 carries the phosphotyrosine modification. A substrate-binding site is contributed by Thr230.

This sequence belongs to the LDH/MDH superfamily. LDH family. As to quaternary structure, homotetramer.

Its subcellular location is the cytoplasm. It carries out the reaction (S)-lactate + NAD(+) = pyruvate + NADH + H(+). It participates in fermentation; pyruvate fermentation to lactate; (S)-lactate from pyruvate: step 1/1. With respect to regulation, allosterically activated by fructose 1,6-bisphosphate (FBP). Functionally, catalyzes the conversion of lactate to pyruvate. The protein is L-lactate dehydrogenase of Fervidobacterium nodosum (strain ATCC 35602 / DSM 5306 / Rt17-B1).